We begin with the raw amino-acid sequence, 1430 residues long: Target of rapamycin complex 2 subunit TSC11 (1430 aa).

Positions 1–62 (MSIPHSAKQS…TITNESSKRN (62 aa)) are disordered. 2 stretches are compositionally biased toward polar residues: residues 7–26 (AKQS…TTPL) and 35–44 (NSSTQISSAK). A Phosphoserine modification is found at Ser19. Residues 45-57 (NITSSSPSTITNE) are compositionally biased toward low complexity. Phosphoserine is present on residues Ser81, Ser84, Ser87, and Ser141. A coiled-coil region spans residues 91-180 (ARRTRSTMTK…EKHIFDLKQQ (90 aa)). The tract at residues 182 to 285 (DKKRQRSLTT…NLTGDTEKDL (104 aa)) is disordered. A compositionally biased stretch (polar residues) spans 233–265 (TTPTSGTERNSQQNLNRNSTVNSRNNENHSTLS). Residues 995–1100 (SVVAVADQAL…FQQKSRLPLH (106 aa)) enclose the N-terminal Ras-GEF domain.

The protein belongs to the RICTOR family. As to quaternary structure, the target of rapamycin complex 2 (TORC2) is composed of at least AVO1, AVO2, BIT61, LST8, TOR2 and TSC11. TORC2 forms a homodimer. Contrary to TORC1, TORC2 does not bind to and is not sensitive to FKBP-rapamycin. TSC11 binds to the N-terminal HEAT repeat region in TOR2 and is required for TORC2 integrity by tethering AVO1 and AVO2 to the complex. In terms of processing, phosphorylated by TOR2; when part of TORC2.

Its subcellular location is the cell membrane. The protein resides in the vacuole membrane. Functionally, essential component of TORC2, which regulates cell cycle-dependent polarization of the actin-cytoskeleton and cell wall integrity. TORC2 controls polarity of the actin cytoskeleton, which is required for orienting the secretory pathway toward discrete growth sites, via the RHO1/PKC1/MAPK cell integrity pathway. TSC11 may exert its functions through two distinct mechanisms, one mediated by AVO1 and the other mediated by AVO2 and SLM1. This Saccharomyces cerevisiae (strain ATCC 204508 / S288c) (Baker's yeast) protein is Target of rapamycin complex 2 subunit TSC11 (TSC11).